Here is a 387-residue protein sequence, read N- to C-terminus: MNDRLDLLPAPFDLEGHLAPYAAHAAQSRGRVHAEPPSTSRTEFQRDRDRIIHCTAFRRLEYKTQVFVNHEGDLFRTRLTHSLEVAQIARSIARSLRLNEDLVEAISLAHDLGHTPFGHAGQDALNDCMKPYGGFEHNLQSLLVVDRLEERYGGFDGLNLTFETREGILKHCSRNNAATLGDLGRRFLEGQQPSLEAQLANLADEVAYNNHDIDDGLRSGLITLEQLEGVPLWARHRREAEAAFPGVGGRRMINETIRRIINALIVDLIAGTRAAITGAAPQSIDDVRAAPPLVAFSEPMRDEARVLKRFLFDNLYRHYLVMRMAAKARRIIEDLFRVFLEDPRLLPPQYQARDPADQPRWIAHYIAGMTDRYAIKEHRRIFAVEVL.

Positions 78-209 (RLTHSLEVAQ…ANLADEVAYN (132 aa)) constitute an HD domain.

The protein belongs to the dGTPase family. Type 2 subfamily.

This is Deoxyguanosinetriphosphate triphosphohydrolase-like protein from Ralstonia nicotianae (strain ATCC BAA-1114 / GMI1000) (Ralstonia solanacearum).